A 212-amino-acid polypeptide reads, in one-letter code: Proheparin-binding EGF-like growth factor (212 aa).

The signal sequence occupies residues 1 to 18 (MDGRVVLIHALLTAVCSA). Over 19–167 (AVGKFGRDGP…PSTYDHTTAL (149 aa)) the chain is Extracellular. The segment at 82 to 108 (SKPQGPVTPKKKGNGNKRRKGKGLGKK) is disordered. Positions 90-106 (PKKKGNGNKRRKGKGLG) are enriched in basic residues. An EGF-like domain is found at 108–148 (KRDPCLRKYKDFCIHGECKYIRELGAPSCICQPGYHGERCH). 3 cysteine pairs are disulfide-bonded: Cys-112-Cys-125, Cys-120-Cys-136, and Cys-138-Cys-147. Residues 153 to 212 (PVEHPPSTYDHTTALAVVAVVLSSLCLVIITALLMFRCHKRGVYDVENEEKIKLGITVNH) constitute a propeptide, C-terminal. Residues 168–188 (AVVAVVLSSLCLVIITALLMF) form a helical membrane-spanning segment. Residues 189 to 212 (RCHKRGVYDVENEEKIKLGITVNH) lie on the Cytoplasmic side of the membrane.

As to quaternary structure, interacts with CNIH2.

The protein localises to the secreted. It localises to the extracellular space. It is found in the cell membrane. Its function is as follows. May be involved in macrophage-mediated cellular proliferation. It is mitogenic for fibroblasts and smooth muscle but not endothelial cells. It is able to bind EGF receptor/EGFR with higher affinity than EGF itself and is a far more potent mitogen for smooth muscle cells than EGF. Plays an important role in the proper development of cranial nerves by inhibiting the migration of the cranial neural crest cells (NCCs) into the odd-numbered neuromeres (r3 and r5) of the hindbrain Plays a role in mediating v-Jun-induced oncogenic transformation. In Gallus gallus (Chicken), this protein is Proheparin-binding EGF-like growth factor (HBEGF).